The sequence spans 294 residues: MASMNTHKPDWLRVKAPQHERIGYVADLLSDLNLNTVCQEASCPNIGECFAGGTATFLIMGPGCTRACPYCDIDFDKSVRSLDPSEPERLGEAVKRLGLKHVVITSVNRDDLEDGGASQFVSCIDAVRASSVETTIELLIPDFCGNWDAFKKVMNASPNVLNHNIETVPRLYKRARPQGLYKRSLELLRRVRQESPNVYSKSGLMVGLGETDDEVLQVLSDLHDNNVDIVTIGQYLSPGTKHLPVDRFVTPDQFQKYKEEGQTRFGFLQVVSSPLTRSSYHAGEVKRLMQIYPR.

7 residues coordinate [4Fe-4S] cluster: Cys38, Cys43, Cys49, Cys64, Cys68, Cys71, and Ser279. Positions 50–268 (FAGGTATFLI…EEGQTRFGFL (219 aa)) constitute a Radical SAM core domain.

Belongs to the radical SAM superfamily. Lipoyl synthase family. [4Fe-4S] cluster serves as cofactor.

The protein localises to the cytoplasm. It carries out the reaction [[Fe-S] cluster scaffold protein carrying a second [4Fe-4S](2+) cluster] + N(6)-octanoyl-L-lysyl-[protein] + 2 oxidized [2Fe-2S]-[ferredoxin] + 2 S-adenosyl-L-methionine + 4 H(+) = [[Fe-S] cluster scaffold protein] + N(6)-[(R)-dihydrolipoyl]-L-lysyl-[protein] + 4 Fe(3+) + 2 hydrogen sulfide + 2 5'-deoxyadenosine + 2 L-methionine + 2 reduced [2Fe-2S]-[ferredoxin]. It functions in the pathway protein modification; protein lipoylation via endogenous pathway; protein N(6)-(lipoyl)lysine from octanoyl-[acyl-carrier-protein]: step 2/2. In terms of biological role, catalyzes the radical-mediated insertion of two sulfur atoms into the C-6 and C-8 positions of the octanoyl moiety bound to the lipoyl domains of lipoate-dependent enzymes, thereby converting the octanoylated domains into lipoylated derivatives. In Prochlorococcus marinus (strain SARG / CCMP1375 / SS120), this protein is Lipoyl synthase 1.